Here is a 459-residue protein sequence, read N- to C-terminus: DIMBOA UDP-glucosyltransferase BX8 (459 aa).

Catalysis depends on His19, which acts as the Proton acceptor. An an anthocyanidin-binding site is contributed by His19. The Charge relay role is filled by Asp119. The UDP-alpha-D-glucose site is built by Thr141, Ala340, Gln342, His357, Trp360, Asn361, Ser362, and Glu365. An an anthocyanidin-binding site is contributed by Gly380. Residues Asp381 and Gln382 each coordinate UDP-alpha-D-glucose.

It belongs to the UDP-glycosyltransferase family. Mg(2+) serves as cofactor. Ca(2+) is required as a cofactor. As to expression, expressed at the same levels in roots and shoots.

The catalysed reaction is DIMBOA + UDP-alpha-D-glucose = DIMBOA beta-D-glucoside + UDP + H(+). It carries out the reaction DIBOA + UDP-alpha-D-glucose = DIBOA beta-D-glucoside + UDP + H(+). In terms of biological role, glucosyltransferase involved in the last step of benzoxazinoid glucoside biosynthesis. Catalyzes the glucosylation of hydroxamic acids utilizing UDP-glucose as glucose doner, reducing the toxicity of these natural insecticides for storage. Can use DIMBOA and DIBOA as substrates, HMBOA (2-hydroxy-7-methoxy-2H-1,4-benzoxazin-3(4H)-one) and HBOA (2-hydroxy-2H-1,4-benzoxazin-3(4H)-one) with a lower efficiency, but not indole acetic acid or quercitin. This Zea mays (Maize) protein is DIMBOA UDP-glucosyltransferase BX8 (Bx8).